Consider the following 160-residue polypeptide: Fimbrial protein (160 aa).

Positions 1–7 (MKSLQKG) are cleaved as a propeptide — leader sequence. An N-methylphenylalanine modification is found at phenylalanine 8. Residues 8-28 (FTLIELMIVVAIIGILAAFAI) form a helical membrane-spanning segment.

It belongs to the N-Me-Phe pilin family. In terms of assembly, the pili are polar flexible filaments of about 5.4 nanometers diameter and 2.5 micrometers average length; they consist of only a single polypeptide chain arranged in a helical configuration of five subunits per turn in the assembled pilus.

Its subcellular location is the fimbrium. The protein localises to the membrane. The chain is Fimbrial protein (fimA) from Dichelobacter nodosus (Bacteroides nodosus).